Reading from the N-terminus, the 475-residue chain is ATP synthase subunit beta, chloroplastic (475 aa).

Residue 155–162 participates in ATP binding; sequence GGAGVGKT.

It belongs to the ATPase alpha/beta chains family. As to quaternary structure, F-type ATPases have 2 components, CF(1) - the catalytic core - and CF(0) - the membrane proton channel. CF(1) has five subunits: alpha(3), beta(3), gamma(1), delta(1), epsilon(1). CF(0) has four main subunits: a(1), b(1), b'(1) and c(9-12).

It localises to the plastid. The protein resides in the chloroplast thylakoid membrane. The catalysed reaction is ATP + H2O + 4 H(+)(in) = ADP + phosphate + 5 H(+)(out). Functionally, produces ATP from ADP in the presence of a proton gradient across the membrane. The catalytic sites are hosted primarily by the beta subunits. This Pyropia yezoensis (Susabi-nori) protein is ATP synthase subunit beta, chloroplastic.